Here is a 237-residue protein sequence, read N- to C-terminus: 7-cyano-7-deazaguanine synthase (237 aa).

An ATP-binding site is contributed by 14 to 24; sequence FSGGQDSATCL. Zn(2+)-binding residues include C202, C217, C220, and C223.

It belongs to the QueC family. Zn(2+) is required as a cofactor.

The enzyme catalyses 7-carboxy-7-deazaguanine + NH4(+) + ATP = 7-cyano-7-deazaguanine + ADP + phosphate + H2O + H(+). It functions in the pathway purine metabolism; 7-cyano-7-deazaguanine biosynthesis. Functionally, catalyzes the ATP-dependent conversion of 7-carboxy-7-deazaguanine (CDG) to 7-cyano-7-deazaguanine (preQ(0)). In Rhodopseudomonas palustris (strain ATCC BAA-98 / CGA009), this protein is 7-cyano-7-deazaguanine synthase.